A 177-amino-acid polypeptide reads, in one-letter code: Large ribosomal subunit protein uL6 (177 aa).

It belongs to the universal ribosomal protein uL6 family. Part of the 50S ribosomal subunit.

This protein binds to the 23S rRNA, and is important in its secondary structure. It is located near the subunit interface in the base of the L7/L12 stalk, and near the tRNA binding site of the peptidyltransferase center. The sequence is that of Large ribosomal subunit protein uL6 from Ralstonia pickettii (strain 12J).